The following is a 195-amino-acid chain: Large ribosomal subunit protein eL18 (195 aa).

Lys-126 is covalently cross-linked (Glycyl lysine isopeptide (Lys-Gly) (interchain with G-Cter in SUMO2)). Ser-137 carries the post-translational modification Phosphoserine. The tract at residues 158–195 is disordered; sequence HFGKAPGTPHSHTKPYVRSKGRKFERARGRRASRGYKN. Thr-165 carries the phosphothreonine modification. Basic residues-rich tracts occupy residues 168–178 and 185–195; these read SHTKPYVRSKG and RGRRASRGYKN. Residue Lys-171 forms a Glycyl lysine isopeptide (Lys-Gly) (interchain with G-Cter in SUMO2) linkage.

It belongs to the eukaryotic ribosomal protein eL18 family. Component of the large ribosomal subunit.

The protein localises to the cytoplasm. It localises to the cytosol. Its subcellular location is the rough endoplasmic reticulum. Functionally, component of the large ribosomal subunit. The sequence is that of Large ribosomal subunit protein eL18 (RPL18) from Sus scrofa (Pig).